A 382-amino-acid chain; its full sequence is Lipid-A-disaccharide synthase (382 aa).

This sequence belongs to the LpxB family.

The catalysed reaction is a lipid X + a UDP-2-N,3-O-bis[(3R)-3-hydroxyacyl]-alpha-D-glucosamine = a lipid A disaccharide + UDP + H(+). It functions in the pathway bacterial outer membrane biogenesis; LPS lipid A biosynthesis. Its function is as follows. Condensation of UDP-2,3-diacylglucosamine and 2,3-diacylglucosamine-1-phosphate to form lipid A disaccharide, a precursor of lipid A, a phosphorylated glycolipid that anchors the lipopolysaccharide to the outer membrane of the cell. The chain is Lipid-A-disaccharide synthase from Dechloromonas aromatica (strain RCB).